The chain runs to 522 residues: MVKHRNSSRSIISYSSSIARFFSRKAISLYLIFVFAFTIWVLVFSSRNIQTDDDHTKHQQQHHRDLIDSESFPPPYLPPRKNLQKPYENTQLWTPPFSFGLHPCVKPTPKYKEFSESDHYITVKSNGGLNQMRTGIADIVAVAHIMNATLVIPELDKRSFWQDSSVFSDIFDEEQFIKSLRRDVKVIKKLPKEVESLPRARKHFTSWSSVGYYEEMTHLWKEYKVIHVAKSDSRLANNDLPIDVQRLRCRVLYRGLCFSPAIESLGQKLVERLKSRAGRYIALHLRYEKDMLAFTGCTYGLTDAESEELRVMRESTSHWKIKSINSTEQREEGLCPLTPKEVGIFLKGLGYSQSTVIYIAAGEIYGGDDRLSELKSRFPNLVFKETLAGNEELKGFTGHATKTAALDYIISVESDVFVPSHSGNMARAVEGHRRFLGHRRTITPDRKGLVKLFVKMERGQLKEGPKLSNFVNQMHKDRQGAPRRRKGPTQGIKGRARFRTEEAFYENPYPECICSSKEHKEP.

A helical; Signal-anchor for type II membrane protein membrane pass occupies residues 26–46; that stretch reads AISLYLIFVFAFTIWVLVFSS. Over residues 54 to 67 the composition is skewed to basic and acidic residues; that stretch reads DHTKHQQQHHRDLI. The interval 54–73 is disordered; sequence DHTKHQQQHHRDLIDSESFP. N147 is a glycosylation site (N-linked (GlcNAc...) asparagine). Residue 284–286 participates in substrate binding; it reads HLR. N325 carries an N-linked (GlcNAc...) asparagine glycan. Residues 475–496 form a disordered region; the sequence is HKDRQGAPRRRKGPTQGIKGRA.

This sequence belongs to the glycosyltransferase GT106 family.

It is found in the membrane. The protein operates within glycan metabolism. This is O-fucosyltransferase 38 from Arabidopsis thaliana (Mouse-ear cress).